Here is a 338-residue protein sequence, read N- to C-terminus: POU domain, class 4, transcription factor 3 (338 aa).

A POU-IV box motif is present at residues 56-65 (RAEALAAVDI). The segment at 91 to 112 (TSPTVPISHPAALTSHPHHPVH) is disordered. Positions 179 to 256 (DVESDPRELE…VLQAWLEEAE (78 aa)) constitute a POU-specific domain. The homeobox DNA-binding region spans 274–333 (RKRKRTSIAAPEKRSLEAYFAIQPRPSSEKIAAIAEKLDLKKNVVRVWFCNQRQKQKRMK).

Belongs to the POU transcription factor family. Interacts with ISL1. In terms of tissue distribution, expressed in the chochlea of the inner ear.

It localises to the nucleus. It is found in the cytoplasm. Functionally, acts as a transcriptional activator. Acts by binding to sequences related to the consensus octamer motif 5'-ATGCAAAT-3' in the regulatory regions of its target genes. Involved in the auditory system development, required for terminal differentiation of hair cells in the inner ear. The polypeptide is POU domain, class 4, transcription factor 3 (Rattus norvegicus (Rat)).